Here is a 728-residue protein sequence, read N- to C-terminus: 1,4-alpha-glucan branching enzyme GlgB (728 aa).

Asp-405 (nucleophile) is an active-site residue. Glu-458 serves as the catalytic Proton donor.

It belongs to the glycosyl hydrolase 13 family. GlgB subfamily. In terms of assembly, monomer.

The enzyme catalyses Transfers a segment of a (1-&gt;4)-alpha-D-glucan chain to a primary hydroxy group in a similar glucan chain.. It functions in the pathway glycan biosynthesis; glycogen biosynthesis. Its function is as follows. Catalyzes the formation of the alpha-1,6-glucosidic linkages in glycogen by scission of a 1,4-alpha-linked oligosaccharide from growing alpha-1,4-glucan chains and the subsequent attachment of the oligosaccharide to the alpha-1,6 position. In Escherichia coli O6:K15:H31 (strain 536 / UPEC), this protein is 1,4-alpha-glucan branching enzyme GlgB.